A 381-amino-acid polypeptide reads, in one-letter code: MRLSKAPPADRFDAVPAASDRPGRGAVRAWLYLLAVLVVAMVAVGGATRLTGSGLSITEWRPVTGVVPPLNAADWAVEFDKYRDTPQYRILNQGIGLDGFKTLYWWEWGHRLLGRIVGLVFFLPFAWFWWRGWLGRRLLLGLLGLGLLGGLQGAIGWIMVASGLQPGMTAVAPLKLALHLTTASLILAGLVWLAAGTRALALAPAPEPVRRVAGLLPVLVLIQIWLGGLVAGSKAGLLYNTWPDMDGMLVPPARMLFDKVPFIENFVDNLALVQFNHRLFAYLVVLVALAHAVQAVRMAPGAAAGRAMGVAALTLAQMGLGIVTLLLQVPLWAGLAHQVFAMAVLIMATVHARLSVGVPAASAPTGAAVPIGLEALAGRGV.

5 helical membrane-spanning segments follow: residues 25–45 (GAVR…VAVG), 112–132 (LLGR…WWRG), 138–158 (LLLG…IGWI), 176–196 (LALH…LAAG), and 212–232 (VAGL…LVAG). His-277 lines the heme pocket. The next 3 helical transmembrane spans lie at 279-299 (LFAY…VRMA), 307-327 (AMGV…TLLL), and 329-349 (VPLW…IMAT). His-337 provides a ligand contact to heme.

This sequence belongs to the COX15/CtaA family. Type 2 subfamily. Interacts with CtaB. It depends on heme b as a cofactor.

The protein localises to the cell membrane. It catalyses the reaction Fe(II)-heme o + 2 A + H2O = Fe(II)-heme a + 2 AH2. It functions in the pathway porphyrin-containing compound metabolism; heme A biosynthesis; heme A from heme O: step 1/1. In terms of biological role, catalyzes the conversion of heme O to heme A by two successive hydroxylations of the methyl group at C8. The first hydroxylation forms heme I, the second hydroxylation results in an unstable dihydroxymethyl group, which spontaneously dehydrates, resulting in the formyl group of heme A. The chain is Heme A synthase from Methylorubrum populi (strain ATCC BAA-705 / NCIMB 13946 / BJ001) (Methylobacterium populi).